Consider the following 135-residue polypeptide: Protein Wnt-7a (135 aa).

2 disulfide bridges follow: C3-C17 and C5-C12. S9 carries the O-palmitoleoyl serine; by PORCN lipid modification. The disordered linker stretch occupies residues 41–69 (VEPVRASRNKRPTFLKIKKPLSYRKPMDT). 4 cysteine pairs are disulfide-bonded: C81/C112, C97/C107, C111/C134, and C130/C131. The N-linked (GlcNAc...) asparagine glycan is linked to N98.

This sequence belongs to the Wnt family. Palmitoleoylation is required for efficient binding to frizzled receptors. Depalmitoleoylation leads to Wnt signaling pathway inhibition. In embryo, in brain and ventral neural tube; in adults, in brain.

The protein resides in the secreted. It localises to the extracellular space. It is found in the extracellular matrix. Ligand for members of the frizzled family of seven transmembrane receptors that functions in the canonical Wnt/beta-catenin signaling pathway. Plays an important role in embryonic development, including dorsal versus ventral patterning during limb development, skeleton development and urogenital tract development. Required for central nervous system (CNS) angiogenesis and blood-brain barrier regulation. This Xenopus laevis (African clawed frog) protein is Protein Wnt-7a (wnt7a).